Consider the following 273-residue polypeptide: 4-hydroxy-tetrahydrodipicolinate reductase (273 aa).

NAD(+) contacts are provided by residues 11-16 (GAGGRM) and E36. R37 is an NADP(+) binding site. NAD(+) is bound by residues 100–102 (GTT) and 124–127 (AANY). H157 serves as the catalytic Proton donor/acceptor. (S)-2,3,4,5-tetrahydrodipicolinate is bound at residue H158. The active-site Proton donor is K161. A (S)-2,3,4,5-tetrahydrodipicolinate-binding site is contributed by 167–168 (GT).

It belongs to the DapB family.

The protein localises to the cytoplasm. It carries out the reaction (S)-2,3,4,5-tetrahydrodipicolinate + NAD(+) + H2O = (2S,4S)-4-hydroxy-2,3,4,5-tetrahydrodipicolinate + NADH + H(+). It catalyses the reaction (S)-2,3,4,5-tetrahydrodipicolinate + NADP(+) + H2O = (2S,4S)-4-hydroxy-2,3,4,5-tetrahydrodipicolinate + NADPH + H(+). Its pathway is amino-acid biosynthesis; L-lysine biosynthesis via DAP pathway; (S)-tetrahydrodipicolinate from L-aspartate: step 4/4. In terms of biological role, catalyzes the conversion of 4-hydroxy-tetrahydrodipicolinate (HTPA) to tetrahydrodipicolinate. The chain is 4-hydroxy-tetrahydrodipicolinate reductase from Acinetobacter baylyi (strain ATCC 33305 / BD413 / ADP1).